A 358-amino-acid polypeptide reads, in one-letter code: Probable D-xylulose reductase A (358 aa).

3 residues coordinate Zn(2+): Cys47, His72, and Glu73. 182–187 (GAGPVG) contacts NAD(+).

Belongs to the zinc-containing alcohol dehydrogenase family. It depends on Zn(2+) as a cofactor.

It carries out the reaction xylitol + NAD(+) = D-xylulose + NADH + H(+). Its pathway is carbohydrate degradation; L-arabinose degradation via L-arabinitol; D-xylulose 5-phosphate from L-arabinose (fungal route): step 4/5. In terms of biological role, xylitol dehydrogenase which catalyzes the conversion of xylitol to D-xylulose. Xylose is a major component of hemicelluloses such as xylan. Most fungi utilize D-xylose via three enzymatic reactions, xylose reductase (XR), xylitol dehydrogenase (XDH), and xylulokinase, to form xylulose 5-phosphate, which enters pentose phosphate pathway. This is Probable D-xylulose reductase A (xdhA) from Aspergillus niger (strain ATCC MYA-4892 / CBS 513.88 / FGSC A1513).